Here is a 132-residue protein sequence, read N- to C-terminus: UPF0102 protein Ajs_0414 (132 aa).

The interval 1 to 23 (MGFLGKKVNGSAPARTTRAAGQA) is disordered.

Belongs to the UPF0102 family.

The chain is UPF0102 protein Ajs_0414 from Acidovorax sp. (strain JS42).